The sequence spans 461 residues: Argininosuccinate lyase (461 aa).

It belongs to the lyase 1 family. Argininosuccinate lyase subfamily.

It is found in the cytoplasm. The enzyme catalyses 2-(N(omega)-L-arginino)succinate = fumarate + L-arginine. The protein operates within amino-acid biosynthesis; L-arginine biosynthesis; L-arginine from L-ornithine and carbamoyl phosphate: step 3/3. This Chlorobium luteolum (strain DSM 273 / BCRC 81028 / 2530) (Pelodictyon luteolum) protein is Argininosuccinate lyase.